Consider the following 143-residue polypeptide: uncharacterized protein (143 aa).

2 consecutive transmembrane segments (helical) span residues 20 to 39 (FKYCSTSLFVLILFNSWITV) and 113 to 135 (YFSLQISLSFAFSGICVKYITGL).

The protein resides in the membrane. This is an uncharacterized protein from Saccharomyces cerevisiae (strain ATCC 204508 / S288c) (Baker's yeast).